The sequence spans 1547 residues: Fatty acid synthase subunit alpha (1547 aa).

The disordered stretch occupies residues 94–121 (TLPEAHPPPPIDSHQEPSTQTQATHRSA). Polar residues predominate over residues 109–118 (EPSTQTQATH). Residues 145-221 (LPVSTIVRSL…ETMSIGHNGR (77 aa)) enclose the Carrier domain. Ser180 bears the O-(pantetheine 4'-phosphoryl)serine mark. A ketoreductase (KR) domain region spans residues 563–798 (GKNVLITGAG…ATLMGGTITT (236 aa)). Positions 1004 to 1476 (KESLQEIVLQ…QKGSQAILIH (473 aa)) constitute a Ketosynthase family 3 (KS3) domain. Residues Cys1190 and His1442 each act as for beta-ketoacyl synthase activity in the active site.

It belongs to the thiolase-like superfamily. Fungal fatty acid synthetase subunit alpha family. Pantetheine 4'-phosphate serves as cofactor.

The enzyme catalyses acetyl-CoA + n malonyl-CoA + 2n NADPH + 4n H(+) = a long-chain-acyl-CoA + n CoA + n CO2 + 2n NADP(+).. The catalysed reaction is a fatty acyl-[ACP] + malonyl-[ACP] + H(+) = a 3-oxoacyl-[ACP] + holo-[ACP] + CO2. It catalyses the reaction a (3R)-hydroxyacyl-[ACP] + NADP(+) = a 3-oxoacyl-[ACP] + NADPH + H(+). The protein operates within mycotoxin biosynthesis; HC-toxin biosynthesis. Its function is as follows. Fatty acid synthase alpha subunit, part of the diffuse TOX2 gene cluster that mediates the biosynthesis of the HC-toxin, cyclic tetrapeptide of structure cyclo(D-Pro-L-Ala-D-Ala-L-Aeo), where Aeo stands for 2-amino-9,10-epoxi-8-oxodecanoic acid. HC-toxin is a determinant of specificity and virulence in the interaction between the producing fungus and its host, maize. TOXH contribute to the synthesis of the decanoic backbone of 2-amino-9,10-epoxi-8-oxodecanoic acid, an essential precursor for the production of the major forms of HC-toxin by the non-ribosomal peptide synthetase HTS1. This chain is Fatty acid synthase subunit alpha, found in Cochliobolus carbonum (Maize leaf spot fungus).